The sequence spans 516 residues: MIDLEALPHLPGCYLFKDEEGVVLYVGKAKDLKKRVSSYFQKRDHDPKTTSLVQAARGLDFIVTNTEVEALLLENTLIKKHWPRYNILLKDSKRYACIHLTGEKFPRIRIARKNTGDGEFFGPFVSAKERDYIFEVVRKTFQLRTCKKMPSRACLRYHIGACSGPCIGSISEEEYGEKVKRATSVLKGNIGELIESMEKEMKKMAAKQMFEQAMALRDEISALEYLQEKQNMERQKKHDEDILNYIVRDNTVYLMLFKVYKGTLEDKQDYVFAFGEDFLQEFLVQYYSENDPPEELIVPQVLEESLVEFLAHVKGKKVKVTVPKQGEKKELLDLALKNVEIGFFGDRKKLESLQSKLSLPKLPNVIECFDISHLSGTSTVGSMVQFRGGRPDKHNYRRFKIESVEGIDDFASIAEVVRRRYSRLLEDKHEMPDLIIIDGGKGQLSSAFQELRKLKIRVPIISIAKREEELYVPGLKSPLPIKRNEKASLFVQEIRDEAHRFAITYNRLLRQKSLIK.

The GIY-YIG domain maps to 9–87; that stretch reads HLPGCYLFKD…IKKHWPRYNI (79 aa). In terms of domain architecture, UVR spans 191-226; the sequence is GELIESMEKEMKKMAAKQMFEQAMALRDEISALEYL.

It belongs to the UvrC family. In terms of assembly, interacts with UvrB in an incision complex.

The protein localises to the cytoplasm. The UvrABC repair system catalyzes the recognition and processing of DNA lesions. UvrC both incises the 5' and 3' sides of the lesion. The N-terminal half is responsible for the 3' incision and the C-terminal half is responsible for the 5' incision. The sequence is that of UvrABC system protein C from Methanosarcina acetivorans (strain ATCC 35395 / DSM 2834 / JCM 12185 / C2A).